A 967-amino-acid polypeptide reads, in one-letter code: Sarcosine oxidase subunit alpha (967 aa).

NAD(+)-binding residues include alanine 141, aspartate 160, glutamate 161, arginine 162, serine 168, valine 207, alanine 420, and threonine 427. (6R)-5,10-methylene-5,6,7,8-tetrahydrofolate is bound by residues threonine 694 and glutamate 786.

The protein belongs to the GcvT family. In terms of assembly, heterotetramer composed of subunits alpha (SoxA), beta (SoxB), gamma (SoxG) and delta (SoxD). The cofactor is NAD(+).

The protein localises to the cytoplasm. It carries out the reaction sarcosine + (6S)-5,6,7,8-tetrahydrofolate + O2 = (6R)-5,10-methylene-5,6,7,8-tetrahydrofolate + glycine + H2O2. The catalysed reaction is sarcosine + O2 + H2O = formaldehyde + glycine + H2O2. In the presence of tetrahydrofolate, catalyzes the oxidative demethylation of sarcosine to yield glycine, 5,10-methylenetetrahydrofolate and hydrogen peroxide. In the absence of tetrahydrofolate, catalyzes the oxidative demethylation of sarcosine to yield glycine, formaldehyde and hydrogen peroxide. In Corynebacterium sp. (strain P-1), this protein is Sarcosine oxidase subunit alpha.